The chain runs to 479 residues: Phosphatidylinositol 4-kinase type 2-beta (479 aa).

Residues 1 to 10 (MESGSEEPDE) are compositionally biased toward acidic residues. The segment at 1 to 91 (MESGSEEPDE…PRVGAGHTGH (91 aa)) is disordered. Low complexity predominate over residues 18 to 34 (PALHAGPPAGRAAPGGA). A compositionally biased stretch (acidic residues) spans 42–62 (GLEEEEEGEEDSGPEGDGEEE). In terms of domain architecture, PI3K/PI4K catalytic spans 118 to 449 (GVLPERISQG…VQMPRVIVER (332 aa)). The G-loop stretch occupies residues 124 to 130 (ISQGSSG). 2 residues coordinate ATP: Ser131 and Lys146. The interval 151–153 (EPY) is important for substrate binding. The interval 159–172 (KWTKYFHKICCPCC) is important for interaction with membranes. ATP is bound by residues 255–258 (QLFV) and 269–270 (RK). The segment at 262 to 270 (KEADYWLRK) is important for interaction with membranes. The interval 299-307 (RNTDRGNDN) is catalytic loop. The segment at 340-360 (AIDNGLAFPFKHPDEWRAYPF) is activation loop. Asp342 serves as a coordination point for ATP. Residues 355–364 (WRAYPFHWAW) form an important for interaction with membranes region.

This sequence belongs to the PI3/PI4-kinase family. Type II PI4K subfamily.

It localises to the cytoplasm. The protein resides in the cytosol. The protein localises to the golgi apparatus membrane. Its subcellular location is the endoplasmic reticulum membrane. It is found in the cell membrane. It localises to the early endosome membrane. It catalyses the reaction a 1,2-diacyl-sn-glycero-3-phospho-(1D-myo-inositol) + ATP = a 1,2-diacyl-sn-glycero-3-phospho-(1D-myo-inositol 4-phosphate) + ADP + H(+). Functionally, contributes to the overall PI4-kinase activity of the cell. This contribution may be especially significant in plasma membrane, endosomal and Golgi compartments. The phosphorylation of phosphatidylinositol (PI) to PI4P is the first committed step in the generation of phosphatidylinositol 4,5-bisphosphate (PIP2), a precursor of the second messenger inositol 1,4,5-trisphosphate (InsP3). This Gallus gallus (Chicken) protein is Phosphatidylinositol 4-kinase type 2-beta (PI4K2B).